Consider the following 343-residue polypeptide: Putative dihydroflavonol 4-reductase (343 aa).

Y150 is an NADP(+) binding site.

The protein belongs to the NAD(P)-dependent epimerase/dehydratase family. Dihydroflavonol-4-reductase subfamily.

The catalysed reaction is a (2R,3S,4S)-leucoanthocyanidin + NADP(+) = a (2R,3R)-dihydroflavonol + NADPH + H(+). Its pathway is secondary metabolite biosynthesis; flavonoid biosynthesis. This Synechocystis sp. (strain ATCC 27184 / PCC 6803 / Kazusa) protein is Putative dihydroflavonol 4-reductase (dfrA).